A 1094-amino-acid polypeptide reads, in one-letter code: Probable arabinosyltransferase C (1094 aa).

The next 13 helical transmembrane spans lie at 28–50, 232–251, 264–286, 341–360, 373–392, 431–453, 466–488, 530–552, 565–582, 586–608, 620–642, 657–679, and 700–722; these read IARYVAVVAGLLGAVLAIATPLL, AAMILGVALTGAALVALHIL, PARWWSIGGLDTLVIAVLVWWHF, SIWMRLPTLAMALTCWWVIS, TSRAAAWTAAGMFLAVWLPL, IGALTLFSGPTGIASIGALLVAI, RFGVLPLVAPILAAATVTAIPIF, SIARRFAVLALVLALAVSVAMSL, SRRIIGITIISFLAMMFT, WTHHFGVFAGLAGSLGALAAVAV, TVFAAVVVFVLALSFASVNGWWY, WRWSLTTALLELTVLVLLLAAWF, and LAGIVQSPLAIATWLLVLFEVVS. Low complexity predominate over residues 817–831; the sequence is GSEPGTEGGTTAAPG. The interval 817-836 is disordered; it reads GSEPGTEGGTTAAPGINGSR.

The protein belongs to the emb family.

Its subcellular location is the cell membrane. Its function is as follows. Arabinosyl transferase responsible for the polymerization of arabinose into the arabinan of arabinogalactan. The sequence is that of Probable arabinosyltransferase C (embC) from Mycobacterium bovis (strain ATCC BAA-935 / AF2122/97).